Consider the following 78-residue polypeptide: Beta-defensin 105A (78 aa).

The first 27 residues, 1–27 (MALIKKTFFFLFAMFFILVQLSSGCQA), serve as a signal peptide directing secretion. 3 disulfide bridges follow: Cys43–Cys74, Cys53–Cys67, and Cys57–Cys73.

The protein belongs to the beta-defensin family.

Its subcellular location is the secreted. In terms of biological role, has antimicrobial activity. The polypeptide is Beta-defensin 105A (DEFB105A) (Pan troglodytes (Chimpanzee)).